Here is a 419-residue protein sequence, read N- to C-terminus: Potassium/proton antiporter CemA (419 aa).

4 consecutive transmembrane segments (helical) span residues 196-216 (LASI…TLLF), 297-317 (IIEL…LCIA), 344-364 (ILLI…EVLI), and 371-391 (FGFV…PVVL).

The protein belongs to the CemA family.

It localises to the plastid. Its subcellular location is the chloroplast inner membrane. The enzyme catalyses K(+)(in) + H(+)(out) = K(+)(out) + H(+)(in). Functionally, contributes to K(+)/H(+) antiport activity by supporting proton efflux to control proton extrusion and homeostasis in chloroplasts in a light-dependent manner to modulate photosynthesis. Prevents excessive induction of non-photochemical quenching (NPQ) under continuous-light conditions. Indirectly promotes efficient inorganic carbon uptake into chloroplasts. This Chara vulgaris (Common stonewort) protein is Potassium/proton antiporter CemA.